The primary structure comprises 119 residues: Histone H1B, sperm (119 aa).

In terms of domain architecture, H15 spans threonine 8–lysine 77. The tract at residues asparagine 76 to asparagine 119 is disordered. Positions leucine 80–asparagine 119 are enriched in basic residues.

Belongs to the histone H1/H5 family.

It localises to the nucleus. The protein resides in the chromosome. In terms of biological role, histones H1 are necessary for the condensation of nucleosome chains into higher-order structures. The sequence is that of Histone H1B, sperm from Platynereis dumerilii (Dumeril's clam worm).